We begin with the raw amino-acid sequence, 129 residues long: Antimicrobial peptide NK-lysin (129 aa).

The signal sequence occupies residues 1 to 6; it reads PGLAFS. A propeptide spanning residues 7–46 is cleaved from the precursor; that stretch reads GLTPEHSALARAHPCDGEQFCQNLAPEDPQGDQLLQREEL. Positions 46–126 constitute a Saposin B-type domain; the sequence is LGLICESCRK…VDIKICKEKT (81 aa). Disulfide bonds link cysteine 50–cysteine 122, cysteine 53–cysteine 116, and cysteine 81–cysteine 91. A propeptide spanning residues 125-129 is cleaved from the precursor; it reads KTGLI.

In terms of tissue distribution, cytotoxic T and NK cells.

It localises to the secreted. May be an effector molecule of cytotoxic activity. High activity against E.coli and B.megaterium, moderate against A.calcoaceticus and S.pyogenes. No activity against P.aeruginosa, S.aureus and Salmonella. Has some antifungal activity against C.albicans. The protein is Antimicrobial peptide NK-lysin (NKL) of Sus scrofa (Pig).